The primary structure comprises 298 residues: Protein ILRUN (298 aa).

The disordered stretch occupies residues 199 to 277 (NTQPHRKVEG…SVNLSPSSHA (79 aa)). S215 and S222 each carry phosphoserine. A compositionally biased stretch (low complexity) spans 242–255 (TWAPAPDTWAPAPD). Residues 262-277 (NRLSQNSVNLSPSSHA) show a composition bias toward polar residues. S272 is subject to Phosphoserine.

As to quaternary structure, interacts with IRF3; the interaction inhibits IRF3 binding to its DNA consensus sequence. In terms of tissue distribution, expressed in lung (at protein level).

Its subcellular location is the cytoplasm. It is found in the nucleus. Negative regulator of innate antiviral response. Blocks IRF3-dependent cytokine production such as IFNA, IFNB and TNF. Interacts with IRF3 and inhibits IRF3 recruitment to type I IFN promoter sequences while also reducing nuclear levels of the coactivators EP300 and CREBBP. This chain is Protein ILRUN, found in Homo sapiens (Human).